We begin with the raw amino-acid sequence, 228 residues long: 3-dehydroquinate dehydratase (228 aa).

3-dehydroquinate-binding positions include 30 to 32 (EWR) and Arg62. Catalysis depends on His118, which acts as the Proton donor/acceptor. The Schiff-base intermediate with substrate role is filled by Lys143. Residues Arg186, Ser205, and Gln209 each coordinate 3-dehydroquinate.

Belongs to the type-I 3-dehydroquinase family. In terms of assembly, homodimer.

The catalysed reaction is 3-dehydroquinate = 3-dehydroshikimate + H2O. It participates in metabolic intermediate biosynthesis; chorismate biosynthesis; chorismate from D-erythrose 4-phosphate and phosphoenolpyruvate: step 3/7. In terms of biological role, involved in the third step of the chorismate pathway, which leads to the biosynthesis of aromatic amino acids. Catalyzes the cis-dehydration of 3-dehydroquinate (DHQ) and introduces the first double bond of the aromatic ring to yield 3-dehydroshikimate. The sequence is that of 3-dehydroquinate dehydratase from Streptococcus pyogenes serotype M12 (strain MGAS9429).